The primary structure comprises 113 residues: Hydrogenase maturation factor HypA (113 aa).

Ni(2+) is bound at residue His-2. Zn(2+)-binding residues include Cys-73, Cys-76, Cys-89, and Cys-92.

It belongs to the HypA/HybF family.

In terms of biological role, involved in the maturation of [NiFe] hydrogenases. Required for nickel insertion into the metal center of the hydrogenase. The polypeptide is Hydrogenase maturation factor HypA (Picosynechococcus sp. (strain ATCC 27264 / PCC 7002 / PR-6) (Agmenellum quadruplicatum)).